Here is a 66-residue protein sequence, read N- to C-terminus: DNA gyrase inhibitor YacG (66 aa).

Zn(2+) contacts are provided by C9, C12, C28, and C32. Residues 45-66 (HKIAGAEESEDELYSGDLEPRH) are disordered.

This sequence belongs to the DNA gyrase inhibitor YacG family. As to quaternary structure, interacts with GyrB. It depends on Zn(2+) as a cofactor.

Functionally, inhibits all the catalytic activities of DNA gyrase by preventing its interaction with DNA. Acts by binding directly to the C-terminal domain of GyrB, which probably disrupts DNA binding by the gyrase. In Pseudomonas entomophila (strain L48), this protein is DNA gyrase inhibitor YacG.